We begin with the raw amino-acid sequence, 87 residues long: Large ribosomal subunit protein bL28 (87 aa).

It belongs to the bacterial ribosomal protein bL28 family.

In Akkermansia muciniphila (strain ATCC BAA-835 / DSM 22959 / JCM 33894 / BCRC 81048 / CCUG 64013 / CIP 107961 / Muc), this protein is Large ribosomal subunit protein bL28.